The sequence spans 250 residues: Agamous-like MADS-box protein AGL8 homolog (250 aa).

The MADS-box domain maps to R3–Y57. The region spanning P88–E178 is the K-box domain. 2 disordered regions span residues Q162–E191 and P206–P241. The span at K171–E180 shows a compositional bias: basic and acidic residues. 2 stretches are compositionally biased toward polar residues: residues Q181 to E191 and G226 to M240.

It localises to the nucleus. Its function is as follows. Probable transcription factor. This chain is Agamous-like MADS-box protein AGL8 homolog (SCM1), found in Solanum commersonii (Commerson's wild potato).